Consider the following 488-residue polypeptide: Dihydrolipoyl dehydrogenase, mitochondrial (488 aa).

The transit peptide at 1–25 (MLRINRISNLRTFGQRFFSTEQQDV) directs the protein to the mitochondrion. Residues 52–61 (EKRGKLGGTC), K70, G134, and 163–165 (TGS) each bind FAD. C61 and C66 are joined by a disulfide. NAD(+) is bound by residues 200-207 (GGGVIGLE), E223, V257, and G294. FAD contacts are provided by residues D335 and 341–344 (MLAH). The Proton acceptor role is filled by H467.

This sequence belongs to the class-I pyridine nucleotide-disulfide oxidoreductase family. Requires FAD as cofactor.

The protein localises to the mitochondrion matrix. The catalysed reaction is N(6)-[(R)-dihydrolipoyl]-L-lysyl-[protein] + NAD(+) = N(6)-[(R)-lipoyl]-L-lysyl-[protein] + NADH + H(+). This Dictyostelium discoideum (Social amoeba) protein is Dihydrolipoyl dehydrogenase, mitochondrial (lpd).